The primary structure comprises 485 residues: MFSWANIGSNEYLPLKNDRKAYLNQWAKRSGLAIAAICILGILILAIVKLFCFKAIIFPIVGGSFNNGTNVFQSTVIVISLDGFRADYLYRGFTPNLLSLAERNVHVPFLIPSFPSITFPNHYTIVTGLYPESHGIVSNNFFDPVTGKQFVNSMPECNKDPTWWDKGEPIWVNAERNNVRSAVHMWPGNEVENHGYRPTYSDGFNFDTTLREKKDRILEWLDLPDKDRPQLLLAYAPHVDMVGHAFGPDSPELNIIIQEVDIVIGELIEGLKKRNIDKHVNIIFLSDHGMAPTSDNRLIWLDNMFNLSAVAHRDAWPLGGFRGESDLDDEYIYESLVNYSRSSLPSAENWNVYSKKDIPSRWHYSNNERIAPVWMIPDVGWSLVSMLDHSPELEYEPLGVHGYDNLSPVMRALFIASGSSFKNFKGKKLAPFQNTEIYGILSHILDLPAQPNNGTYEGALPLRRNRNSTKEWLLKDIEQAYSKLI.

Residues 1–30 (MFSWANIGSNEYLPLKNDRKAYLNQWAKRS) lie on the Cytoplasmic side of the membrane. The chain crosses the membrane as a helical span at residues 31-51 (GLAIAAICILGILILAIVKLF). Over 52–485 (CFKAIIFPIV…DIEQAYSKLI (434 aa)) the chain is Extracellular. N-linked (GlcNAc...) asparagine glycosylation occurs at asparagine 67. Positions 74-404 (STVIVISLDG…YEPLGVHGYD (331 aa)) are phosphodiesterase. Threonine 118 serves as the catalytic Nucleophile. 4 N-linked (GlcNAc...) asparagine glycosylation sites follow: asparagine 306, asparagine 338, asparagine 453, and asparagine 467.

It belongs to the nucleotide pyrophosphatase/phosphodiesterase family.

It is found in the membrane. This is an uncharacterized protein from Schizosaccharomyces pombe (strain 972 / ATCC 24843) (Fission yeast).